Consider the following 493-residue polypeptide: Tripartite motif-containing protein 5 (493 aa).

At Ala2 the chain carries N-acetylalanine. The segment at 15–59 (CPICLELLTQPLSLDCGHSFCQACLTANHKKSMLDKGESSCPVCR) adopts an RING-type zinc-finger fold. Ser86 bears the Phosphoserine mark. The B box-type zinc finger occupies 90–132 (QKVDHCARHGEKLLLFCQEDGKVICWLCERSQEHRGHHTFLTE). Residues Cys95, His98, Cys117, and His123 each contribute to the Zn(2+) site. Residues 130–241 (LTEEVAREYQ…ISDLEHRLQG (112 aa)) adopt a coiled-coil conformation. A required for interaction with GABARAP and for autophagy region spans residues 185–198 (FEQLRDILDWEESN). The B30.2/SPRY domain maps to 281–493 (LKGMLEVFRE…VPMTLCSPSS (213 aa)).

This sequence belongs to the TRIM/RBCC family. In terms of assembly, can form homodimers and homotrimers. In addition to lower-order dimerization, also exhibits a higher-order multimerization and both low- and high-order multimerizations are essential for its restriction activity. Isoform Delta interacts with BTBD1 and BTBD2. Interacts with PSMC4, PSMC5, PSMD7 and HSPA8/HSC70. Interacts (via B30.2/SPRY domain) with HSPA1A/B. Interacts with PSMC2, MAP3K7/TAK1, TAB2 and TAB3. Interacts with SQSTM1. Interacts with TRIM6 and TRIM34. Interacts with ULK1 (phosphorylated form), GABARAP, GABARAPL1, GABARAPL2, MAP1LC3A, MAP1LC3C and BECN1. Post-translationally, degraded in a proteasome-independent fashion in the absence of viral infection but in a proteasome-dependent fashion following exposure to restriction sensitive virus. In terms of processing, autoubiquitinated in a RING finger- and UBE2D2-dependent manner. Monoubiquitinated by TRIM21. Deubiquitinated by Yersinia YopJ. Ubiquitination may not lead to proteasomal degradation.

Its subcellular location is the cytoplasm. The protein resides in the nucleus. It carries out the reaction S-ubiquitinyl-[E2 ubiquitin-conjugating enzyme]-L-cysteine + [acceptor protein]-L-lysine = [E2 ubiquitin-conjugating enzyme]-L-cysteine + N(6)-ubiquitinyl-[acceptor protein]-L-lysine.. The protein operates within protein modification; protein ubiquitination. Capsid-specific restriction factor that prevents infection from non-host-adapted retroviruses. Blocks viral replication early in the life cycle, after viral entry but before reverse transcription. In addition to acting as a capsid-specific restriction factor, also acts as a pattern recognition receptor that activates innate immune signaling in response to the retroviral capsid lattice. Binding to the viral capsid triggers its E3 ubiquitin ligase activity, and in concert with the heterodimeric ubiquitin conjugating enzyme complex UBE2V1-UBE2N (also known as UBC13-UEV1A complex) generates 'Lys-63'-linked polyubiquitin chains, which in turn are catalysts in the autophosphorylation of the MAP3K7/TAK1 complex (includes TAK1, TAB2, and TAB3). Activation of the MAP3K7/TAK1 complex by autophosphorylation results in the induction and expression of NF-kappa-B and MAPK-responsive inflammatory genes, thereby leading to an innate immune response in the infected cell. Restricts infection by N-tropic murine leukemia virus (N-MLV), equine infectious anemia virus (EIAV), simian immunodeficiency virus of macaques (SIVmac), feline immunodeficiency virus (FIV), and bovine immunodeficiency virus (BIV). Plays a role in regulating autophagy through activation of autophagy regulator BECN1 by causing its dissociation from its inhibitors BCL2 and TAB2. Also plays a role in autophagy by acting as a selective autophagy receptor which recognizes and targets HIV-1 capsid protein p24 for autophagic destruction. In Homo sapiens (Human), this protein is Tripartite motif-containing protein 5 (TRIM5).